A 265-amino-acid chain; its full sequence is Hydroxyethylthiazole kinase (265 aa).

Met50 is a binding site for substrate. The ATP site is built by Arg125 and Thr171. Gly198 is a binding site for substrate.

It belongs to the Thz kinase family. Mg(2+) serves as cofactor.

The enzyme catalyses 5-(2-hydroxyethyl)-4-methylthiazole + ATP = 4-methyl-5-(2-phosphooxyethyl)-thiazole + ADP + H(+). It participates in cofactor biosynthesis; thiamine diphosphate biosynthesis; 4-methyl-5-(2-phosphoethyl)-thiazole from 5-(2-hydroxyethyl)-4-methylthiazole: step 1/1. Its function is as follows. Catalyzes the phosphorylation of the hydroxyl group of 4-methyl-5-beta-hydroxyethylthiazole (THZ). The chain is Hydroxyethylthiazole kinase from Salmonella arizonae (strain ATCC BAA-731 / CDC346-86 / RSK2980).